The chain runs to 79 residues: Sec-independent protein translocase protein TatA (79 aa).

The helical transmembrane segment at 1–21 (MGSFSIWHWLIVLAIVVLVFG) threads the bilayer. Residues 43–79 (VKDGSTSTDTPAAAPGQVAGQTAADKTTIDVEAKQKG) form a disordered region. Over residues 69-79 (TTIDVEAKQKG) the composition is skewed to basic and acidic residues.

It belongs to the TatA/E family. The Tat system comprises two distinct complexes: a TatABC complex, containing multiple copies of TatA, TatB and TatC subunits, and a separate TatA complex, containing only TatA subunits. Substrates initially bind to the TatABC complex, which probably triggers association of the separate TatA complex to form the active translocon.

It is found in the cell inner membrane. Its function is as follows. Part of the twin-arginine translocation (Tat) system that transports large folded proteins containing a characteristic twin-arginine motif in their signal peptide across membranes. TatA could form the protein-conducting channel of the Tat system. The polypeptide is Sec-independent protein translocase protein TatA (Delftia acidovorans (strain DSM 14801 / SPH-1)).